A 32-amino-acid polypeptide reads, in one-letter code: MSDIN-like toxin proprotein 2 (32 aa).

The propeptide occupies Met1 to Pro10. Positions His11–Pro17 form a cross-link, cyclopeptide (His-Pro). The propeptide occupies Tyr18–Lys32.

This sequence belongs to the MSDIN fungal toxin family. Processed by the macrocyclase-peptidase enzyme POPB to yield a toxic cyclic heptapeptide. POPB first removes 10 residues from the N-terminus. Conformational trapping of the remaining peptide forces the enzyme to release this intermediate rather than proceed to macrocyclization. The enzyme rebinds the remaining peptide in a different conformation and catalyzes macrocyclization of the N-terminal 7 residues.

In terms of biological role, probable toxin that belongs to the MSDIN-like toxin family responsible for a large number of food poisoning cases and deaths. In Amanita fuligineoides, this protein is MSDIN-like toxin proprotein 2.